The chain runs to 56 residues: uncharacterized protein (56 aa).

This is an uncharacterized protein from Saccharolobus islandicus (Sulfolobus islandicus).